A 377-amino-acid chain; its full sequence is Subtilisin-like protease CPC735_012930 (377 aa).

The first 20 residues, 1-20, serve as a signal peptide directing secretion; it reads MSILFKIFASTLAVVSVVNA. The propeptide occupies 21 to 118; that stretch reads GELLNFENER…VEPDRMASAT (98 aa). The 79-residue stretch at 36–114 folds into the Inhibitor I9 domain; sequence SYIVVMKDGT…HVKYVEPDRM (79 aa). A Peptidase S8 domain is found at 128-377; that stretch reads SWGLGRISHT…NKLLYNKSGF (250 aa). Residues Asp-160 and His-191 each act as charge relay system in the active site. An N-linked (GlcNAc...) asparagine glycan is attached at Asn-252. The active-site Charge relay system is the Ser-323. Residues Asn-364 and Asn-373 are each glycosylated (N-linked (GlcNAc...) asparagine).

The protein belongs to the peptidase S8 family.

It localises to the secreted. Secreted subtilisin-like serine protease with keratinolytic activity that contributes to pathogenicity. The polypeptide is Subtilisin-like protease CPC735_012930 (Coccidioides posadasii (strain C735) (Valley fever fungus)).